Consider the following 134-residue polypeptide: Phospholipase A2 (134 aa).

Positions 8, 10, and 12 each coordinate Ca(2+). 5 disulfide bridges follow: Cys9-Cys31, Cys30-Cys70, Cys37-Cys63, Cys61-Cys95, and Cys105-Cys113. A glycan (N-linked (GlcNAc...) asparagine) is linked at Asn13. His34 is an active-site residue. Asp35 is a Ca(2+) binding site. Residue Asp64 is part of the active site.

The protein belongs to the phospholipase A2 family. Group III subfamily. Ca(2+) serves as cofactor. As to expression, expressed by the venom gland.

The protein resides in the secreted. The catalysed reaction is a 1,2-diacyl-sn-glycero-3-phosphocholine + H2O = a 1-acyl-sn-glycero-3-phosphocholine + a fatty acid + H(+). PLA2 catalyzes the calcium-dependent hydrolysis of the 2-acyl groups in 3-sn-phosphoglycerides. The polypeptide is Phospholipase A2 (Apis dorsata (Giant honeybee)).